The primary structure comprises 442 residues: DNA topoisomerase 6 subunit A3 (442 aa).

The tract at residues 1-34 is disordered; it reads MSEKKRRGGAGAGAASGSASKKPRVSTAASYAES. The Topo IIA-type catalytic domain occupies 91 to 224; that stretch reads QDSASVTSRI…LHVVASEKGV (134 aa). The active-site O-(5'-phospho-DNA)-tyrosine intermediate is tyrosine 185. Residues glutamate 271 and aspartate 323 each coordinate Mg(2+).

The protein belongs to the TOP6A family. Homodimer. Heterotetramer of two TOP6A and two TOP6B subunits. Interacts with TOP6B. Mg(2+) serves as cofactor. As to expression, highly expressed in flowers before pollination. Expressed in roots and shoots.

It is found in the nucleus. It catalyses the reaction ATP-dependent breakage, passage and rejoining of double-stranded DNA.. Component of the DNA topoisomerase VI involved in chromatin organization and progression of endoreduplication cycles. Relaxes both positive and negative superturns and exhibits a strong decatenase activity. May be involved in cell proliferation and stress tolerance. The chain is DNA topoisomerase 6 subunit A3 from Oryza sativa subsp. indica (Rice).